Consider the following 56-residue polypeptide: Small ribosomal subunit protein uS14 (56 aa).

Cys-21, Cys-24, Cys-39, and Cys-42 together coordinate Zn(2+).

This sequence belongs to the universal ribosomal protein uS14 family. Zinc-binding uS14 subfamily. As to quaternary structure, part of the 30S ribosomal subunit. Requires Zn(2+) as cofactor.

In terms of biological role, binds 16S rRNA, required for the assembly of 30S particles. The chain is Small ribosomal subunit protein uS14 from Thermococcus kodakarensis (strain ATCC BAA-918 / JCM 12380 / KOD1) (Pyrococcus kodakaraensis (strain KOD1)).